A 285-amino-acid polypeptide reads, in one-letter code: Probable endonuclease 4 (285 aa).

Residues His-67, His-107, Glu-144, Asp-177, His-180, His-214, Asp-227, His-229, and Glu-259 each contribute to the Zn(2+) site.

This sequence belongs to the AP endonuclease 2 family. The cofactor is Zn(2+).

The enzyme catalyses Endonucleolytic cleavage to 5'-phosphooligonucleotide end-products.. In terms of biological role, endonuclease IV plays a role in DNA repair. It cleaves phosphodiester bonds at apurinic or apyrimidinic (AP) sites, generating a 3'-hydroxyl group and a 5'-terminal sugar phosphate. The protein is Probable endonuclease 4 of Persephonella marina (strain DSM 14350 / EX-H1).